A 664-amino-acid polypeptide reads, in one-letter code: Macoilin (664 aa).

4 consecutive transmembrane segments (helical) span residues 28 to 48 (TFLY…DFVL), 75 to 95 (AFSV…LLFI), 120 to 140 (VCLP…AIRF), and 154 to 174 (FAAH…KSYV). The span at 253–265 (REKGKEKDKDAKK) shows a compositional bias: basic and acidic residues. The interval 253 to 274 (REKGKEKDKDAKKHNLGINNNN) is disordered. The residue at position 305 (Ser305) is a Phosphoserine. Polar residues predominate over residues 320–348 (KNYKNASGVVNSSPRSHSATNGSIPSSSS). The tract at residues 320 to 375 (KNYKNASGVVNSSPRSHSATNGSIPSSSSKNEKKQKCTSKSPSTHKDLMENCIPNN) is disordered. An N-linked (GlcNAc...) asparagine glycan is attached at Asn324. At Ser332 the chain carries Phosphoserine. N-linked (GlcNAc...) asparagine glycosylation is found at Asn340 and Asn452. Positions 630–664 (TSPLSPVSPHYSSKFVETSPSGLDPNASVYQPLKK) are disordered. A phosphoserine mark is found at Ser631 and Ser634. Asn655 is a glycosylation site (N-linked (GlcNAc...) asparagine).

This sequence belongs to the macoilin family.

The protein localises to the rough endoplasmic reticulum membrane. Its subcellular location is the nucleus membrane. Plays a role in the regulation of neuronal activity. The sequence is that of Macoilin (MACO1) from Canis lupus familiaris (Dog).